Consider the following 114-residue polypeptide: Protein S40-2 (114 aa).

Positions 23-50 (RYTKLYNSRNDEKKGTRRHETAEKTSPV) are disordered. Residues 31–45 (RNDEKKGTRRHETAE) show a composition bias toward basic and acidic residues.

It belongs to the senescence regulator S40 family.

The protein resides in the cytoplasm. This Arabidopsis thaliana (Mouse-ear cress) protein is Protein S40-2.